We begin with the raw amino-acid sequence, 585 residues long: SLAIN motif-containing protein-like (585 aa).

Disordered regions lie at residues 1–34 (MVVP…PNLT), 55–125 (NQTL…RVEE), 324–365 (QDYA…EDEC), 402–476 (PRLS…SDGQ), and 492–585 (GSMS…DGCY). Positions 68-83 (GGTNNSNLKAGSNINN) are enriched in polar residues. Positions 327-345 (ASTSASRRSSSASLQSLRR) are enriched in low complexity. Over residues 351 to 365 (QEFDSYSQEDEEDEC) the composition is skewed to acidic residues. 3 stretches are compositionally biased toward polar residues: residues 425–434 (PNLTPRTSLR), 441–476 (NSRS…SDGQ), and 549–563 (ASPS…TPRS). Over residues 575 to 585 (LTDESWKDGCY) the composition is skewed to basic and acidic residues.

Belongs to the SLAIN motif-containing family.

This chain is SLAIN motif-containing protein-like, found in Danio rerio (Zebrafish).